We begin with the raw amino-acid sequence, 255 residues long: MSNITMKELLEAGVHFGHQTKRWNPKMKPYIFGARNGIYIIDLQKTVRLFKNAYSFVTDAAQAGETVLFVGTKKQAQDSVAEEAQRCGQFYVNDRWLGGMLTNFSTVKQSIDRLKRLDAMIADGTIEAYTKKEQLKLAKEREKLEKTLGGIKGMGKVPGVLFVVDPKNEEIAVSEAKKLGIPVVAIVDTNCDPDDINYVIPGNDDAIRAIRLLTSKMADAVLEGGQARNARLQTGAEEEFSTEGEEVVEETPAEA.

The disordered stretch occupies residues 231 to 255 (RLQTGAEEEFSTEGEEVVEETPAEA). Acidic residues predominate over residues 236–255 (AEEEFSTEGEEVVEETPAEA).

It belongs to the universal ribosomal protein uS2 family.

This chain is Small ribosomal subunit protein uS2, found in Geobacter sp. (strain M21).